The primary structure comprises 142 residues: Coactosin-like protein (142 aa).

A2 is modified (N-acetylalanine). Residues 2–130 enclose the ADF-H domain; that stretch reads ATKIDKEACR…EEDFIRSELK (129 aa). S23 carries the phosphoserine modification. The segment at 66 to 75 is flexible and important for F-actin binding; the sequence is TGDAMSKRSK. K102 carries the N6-acetyllysine modification. Phosphoserine is present on S141.

It belongs to the actin-binding proteins ADF family. Coactosin subfamily. As to quaternary structure, interacts with 5-lipoxygenase (ALOX5/5LO) in a calcium-independent manner. Binds to F-actin with a stoichiometry of 1:2.

It is found in the cytoplasm. It localises to the cytoskeleton. Its subcellular location is the nucleus. In terms of biological role, binds to F-actin in a calcium-independent manner. Has no direct effect on actin depolymerization. Acts as a chaperone for ALOX5 (5LO), influencing both its stability and activity in leukotrienes synthesis. This is Coactosin-like protein from Rattus norvegicus (Rat).